A 64-amino-acid polypeptide reads, in one-letter code: Small ribosomal subunit protein eS17 (64 aa).

It belongs to the eukaryotic ribosomal protein eS17 family.

The chain is Small ribosomal subunit protein eS17 from Methanosarcina mazei (strain ATCC BAA-159 / DSM 3647 / Goe1 / Go1 / JCM 11833 / OCM 88) (Methanosarcina frisia).